The primary structure comprises 351 residues: Quinolinate phosphoribosyltransferase [decarboxylating] 2b, mitochondrial (351 aa).

Residues Arg142, 173 to 175, Arg197, Lys207, Glu240, Asp267, 299 to 301, and 320 to 322 each bind substrate; these read TRK, SGN, and SGA.

This sequence belongs to the NadC/ModD family. Expressed in roots and flowers.

The protein resides in the mitochondrion. It carries out the reaction nicotinate beta-D-ribonucleotide + CO2 + diphosphate = quinolinate + 5-phospho-alpha-D-ribose 1-diphosphate + 2 H(+). It participates in alkaloid biosynthesis; nicotine biosynthesis. Its pathway is cofactor biosynthesis; NAD(+) biosynthesis; nicotinate D-ribonucleotide from quinolinate: step 1/1. Functionally, involved in the biosynthesis of pyridine alkaloid natural products, leading mainly to the production of anabasine, anatabine, nicotine and nornicotine, effective deterrents against herbivores with antiparasitic and pesticide properties (neurotoxins); nornicotine serves as the precursor in the synthesis of the carcinogen compound N'-nitrosonornicotine (NNN). Involved in the catabolism of quinolinic acid (QA). This Nicotiana tabacum (Common tobacco) protein is Quinolinate phosphoribosyltransferase [decarboxylating] 2b, mitochondrial.